Here is a 459-residue protein sequence, read N- to C-terminus: DIMBOA UDP-glucosyltransferase BX8 (459 aa).

His19 acts as the Proton acceptor in catalysis. An anthocyanidin is bound at residue His19. Asp119 acts as the Charge relay in catalysis. The UDP-alpha-D-glucose site is built by Thr141, Ala340, Gln342, His357, Trp360, Asn361, Ser362, and Glu365. Gly380 contributes to the an anthocyanidin binding site. Asp381 and Gln382 together coordinate UDP-alpha-D-glucose.

The protein belongs to the UDP-glycosyltransferase family. Mg(2+) is required as a cofactor. Ca(2+) serves as cofactor. Expressed at the same levels in roots and shoots.

The catalysed reaction is DIMBOA + UDP-alpha-D-glucose = DIMBOA beta-D-glucoside + UDP + H(+). It carries out the reaction DIBOA + UDP-alpha-D-glucose = DIBOA beta-D-glucoside + UDP + H(+). Its function is as follows. Glucosyltransferase involved in the last step of benzoxazinoid glucoside biosynthesis. Catalyzes the glucosylation of hydroxamic acids utilizing UDP-glucose as glucose doner, reducing the toxicity of these natural insecticides for storage. Can use DIMBOA and DIBOA as substrates, HMBOA (2-hydroxy-7-methoxy-2H-1,4-benzoxazin-3(4H)-one) and HBOA (2-hydroxy-2H-1,4-benzoxazin-3(4H)-one) with a lower efficiency, but not indole acetic acid or quercitin. The chain is DIMBOA UDP-glucosyltransferase BX8 (Bx8) from Zea mays (Maize).